We begin with the raw amino-acid sequence, 260 residues long: Ribosomal RNA small subunit methyltransferase J (260 aa).

S-adenosyl-L-methionine contacts are provided by residues 125-126 (ER) and Asp-179.

This sequence belongs to the methyltransferase superfamily. RsmJ family.

The protein resides in the cytoplasm. The enzyme catalyses guanosine(1516) in 16S rRNA + S-adenosyl-L-methionine = N(2)-methylguanosine(1516) in 16S rRNA + S-adenosyl-L-homocysteine + H(+). Functionally, specifically methylates the guanosine in position 1516 of 16S rRNA. This chain is Ribosomal RNA small subunit methyltransferase J, found in Pseudomonas entomophila (strain L48).